The primary structure comprises 325 residues: UPF0285 protein MMP0642 (325 aa).

The protein belongs to the UPF0285 family.

The polypeptide is UPF0285 protein MMP0642 (Methanococcus maripaludis (strain DSM 14266 / JCM 13030 / NBRC 101832 / S2 / LL)).